We begin with the raw amino-acid sequence, 96 residues long: Plasminogen-like protein B (96 aa).

The signal sequence occupies residues 1–19; the sequence is MEHKEVVLLLLLFLKSGQG. The 77-residue stretch at 20–96 folds into the PAN domain; the sequence is EPLDDYVNTQ…RMRDAVLFEK (77 aa). Disulfide bonds link C49/C73 and C53/C61.

Its subcellular location is the secreted. May bind noncovalently to lysine binding sites present in the kringle structures of plasminogen. This may interfere with the binding of fibrin or alpha-2-antiplasmin to plasminogen and may result in the localization of activity at sites necessary for extracellular matrix destruction. This is Plasminogen-like protein B (PLGLB1) from Homo sapiens (Human).